Here is a 537-residue protein sequence, read N- to C-terminus: CTP synthase (537 aa).

The tract at residues 1 to 265 (MTKFIFVTGG…GKYLVKRLGL (265 aa)) is amidoligase domain. S13 contributes to the CTP binding site. S13 is a binding site for UTP. 14–19 (GLGKGI) is a binding site for ATP. Y54 is a binding site for L-glutamine. Position 71 (D71) interacts with ATP. Residues D71 and E139 each coordinate Mg(2+). CTP-binding positions include 146 to 148 (DIE), 186 to 191 (KTKPTQ), and K222. UTP-binding positions include 186 to 191 (KTKPTQ) and K222. The Glutamine amidotransferase type-1 domain occupies 290-532 (EIAIVGKYVK…VKAAKEYKQE (243 aa)). G351 contacts L-glutamine. The Nucleophile; for glutamine hydrolysis role is filled by C378. L-glutamine-binding positions include 379–382 (FGFQ), E402, and R459. Catalysis depends on residues H505 and E507.

The protein belongs to the CTP synthase family. In terms of assembly, homotetramer.

The catalysed reaction is UTP + L-glutamine + ATP + H2O = CTP + L-glutamate + ADP + phosphate + 2 H(+). It catalyses the reaction L-glutamine + H2O = L-glutamate + NH4(+). The enzyme catalyses UTP + NH4(+) + ATP = CTP + ADP + phosphate + 2 H(+). It participates in pyrimidine metabolism; CTP biosynthesis via de novo pathway; CTP from UDP: step 2/2. Allosterically activated by GTP, when glutamine is the substrate; GTP has no effect on the reaction when ammonia is the substrate. The allosteric effector GTP functions by stabilizing the protein conformation that binds the tetrahedral intermediate(s) formed during glutamine hydrolysis. Inhibited by the product CTP, via allosteric rather than competitive inhibition. Functionally, catalyzes the ATP-dependent amination of UTP to CTP with either L-glutamine or ammonia as the source of nitrogen. Regulates intracellular CTP levels through interactions with the four ribonucleotide triphosphates. The chain is CTP synthase from Pyrococcus abyssi (strain GE5 / Orsay).